The chain runs to 416 residues: Creatine kinase U-type, mitochondrial (416 aa).

The N-terminal 39 residues, 1-39, are a transit peptide targeting the mitochondrion; the sequence is MAGPFSRLLSARPGLRLLALAGAGSLAAGFLLRSEPVRA. Residues 40-64 form a cardiolipin-binding region; the sequence is ASERRRLYPPSAEYPDLRKHNNCMA. A Phosphagen kinase N-terminal domain is found at 45–131; it reads RLYPPSAEYP…FDPVIQERHN (87 aa). Ser-151 carries the post-translational modification Phosphoserine. Positions 158–400 constitute a Phosphagen kinase C-terminal domain; the sequence is YVLSSRVRTG…NFLIDCERRL (243 aa). 161–165 is an ATP binding site; the sequence is SSRVR. Ser-196 is modified (phosphoserine). Position 213 is a phosphothreonine (Thr-213). His-224 is an ATP binding site. A Phosphoserine modification is found at Ser-232. Residues Arg-269, Arg-325, and 353–358 each bind ATP; that span reads RGTGGV. At Thr-355 the chain carries Phosphothreonine. Residue Ser-365 is modified to Phosphoserine. Asp-368 contacts ATP.

The protein belongs to the ATP:guanido phosphotransferase family. As to quaternary structure, exists as an octamer composed of four MTCK homodimers.

The protein resides in the mitochondrion inner membrane. The enzyme catalyses creatine + ATP = N-phosphocreatine + ADP + H(+). Functionally, reversibly catalyzes the transfer of phosphate between ATP and various phosphogens (e.g. creatine phosphate). Creatine kinase isoenzymes play a central role in energy transduction in tissues with large, fluctuating energy demands, such as skeletal muscle, heart, brain and spermatozoa. The polypeptide is Creatine kinase U-type, mitochondrial (CKMT1) (Bos taurus (Bovine)).